A 356-amino-acid chain; its full sequence is DNA-directed RNA polymerase subunit alpha (356 aa).

Residues 1-230 (MNLHRISSEP…DLLKPLLKVE (230 aa)) are alpha N-terminal domain (alpha-NTD). The tract at residues 267–356 (IDQPLLPADS…IRKSYGHILG (90 aa)) is alpha C-terminal domain (alpha-CTD).

This sequence belongs to the RNA polymerase alpha chain family. In terms of assembly, in plastids the minimal PEP RNA polymerase catalytic core is composed of four subunits: alpha, beta, beta', and beta''. When a (nuclear-encoded) sigma factor is associated with the core the holoenzyme is formed, which can initiate transcription.

It is found in the plastid. It localises to the chloroplast. The enzyme catalyses RNA(n) + a ribonucleoside 5'-triphosphate = RNA(n+1) + diphosphate. Functionally, DNA-dependent RNA polymerase catalyzes the transcription of DNA into RNA using the four ribonucleoside triphosphates as substrates. The protein is DNA-directed RNA polymerase subunit alpha of Zygnema circumcarinatum (Green alga).